We begin with the raw amino-acid sequence, 308 residues long: Transcriptional adapter 1-1 (308 aa).

Belongs to the TADA1 family. Component of the Spt-Ada-Gcn5 acetyltransferase (SAGA) complex consisting of wda/Taf5L, Saf6, Taf9, Taf10b, Taf12, Ada1, Spt3, Spt7, Spt20, Sf3b3, Sf3b5, Nipped-A/Tra1, a histone acetyltransferase (HAT) module made up of Gcn5, Ada2b (Isoform B), Ada3 and Sgf29, and a deubiquitinase (DUB) module made up of not/nonstop, Sgf11 and e(y)2 tethered to SAGA by Atxn7. Not a component of the Ada2a-containing ATAC complex.

The protein localises to the nucleus. Component of the transcription regulatory complex SAGA, a multiprotein complex that activates transcription by remodeling chromatin and mediating histone acetylation and deubiquitination. The SAGA complex predominantly acetylates histone H3. The polypeptide is Transcriptional adapter 1-1 (Drosophila melanogaster (Fruit fly)).